Reading from the N-terminus, the 270-residue chain is MVWFRCMRYGEAAIVLSAVLMGTVSVFVRNVGGDTLSVTFLRLFFGFLAVLPFCLRDVGRPDRTLLGLAVFNFLTVASYIAAIQSTEVAMAALLLYMAPVYVIPLSVLMGERVEVKTLLALPLGLIGLYLMLTPYAELTFGIIFGIVSGLSYAIVFVLSKEARKKHSPWRITFYNLGLGSAALLPYFLMFGRVGSWLWAIGLGVVPTAVPFVLFSYGMKYVKVQRAPILALIEPLCAGLVGYFYFGETLTLTQLIGGAMILAGVLIAWRE.

10 consecutive transmembrane segments (helical) span residues 12 to 32, 35 to 55, 64 to 84, 88 to 108, 117 to 137, 138 to 158, 171 to 191, 194 to 214, 226 to 246, and 248 to 268; these read AAIV…RNVG, TLSV…PFCL, TLLG…AAIQ, VAMA…LSVL, TLLA…PYAE, LTFG…VFVL, ITFY…LMFG, GSWL…FVLF, APIL…FYFG, and TLTL…LIAW. 2 EamA domains span residues 19–133 and 150–269; these read VLMG…LMLT and LSYA…IAWR.

Belongs to the EamA transporter family.

The protein localises to the cell membrane. This is an uncharacterized protein from Archaeoglobus fulgidus (strain ATCC 49558 / DSM 4304 / JCM 9628 / NBRC 100126 / VC-16).